The following is a 342-amino-acid chain: Ketol-acid reductoisomerase (NADP(+)) (342 aa).

Residues 2–181 (VKVYYNGDIK…GGARAGVLET (180 aa)) form the KARI N-terminal Rossmann domain. Residues 25 to 28 (YGSQ), Arg-48, Ser-52, and 82 to 85 (DEQQ) contribute to the NADP(+) site. His-107 is an active-site residue. Gly-133 lines the NADP(+) pocket. In terms of domain architecture, KARI C-terminal knotted spans 182–327 (TFKEETETDL…RKLREMMPFV (146 aa)). The Mg(2+) site is built by Asp-190, Glu-194, Glu-226, and Glu-230. Ser-251 provides a ligand contact to substrate.

Belongs to the ketol-acid reductoisomerase family. Requires Mg(2+) as cofactor.

It carries out the reaction (2R)-2,3-dihydroxy-3-methylbutanoate + NADP(+) = (2S)-2-acetolactate + NADPH + H(+). The enzyme catalyses (2R,3R)-2,3-dihydroxy-3-methylpentanoate + NADP(+) = (S)-2-ethyl-2-hydroxy-3-oxobutanoate + NADPH + H(+). It functions in the pathway amino-acid biosynthesis; L-isoleucine biosynthesis; L-isoleucine from 2-oxobutanoate: step 2/4. The protein operates within amino-acid biosynthesis; L-valine biosynthesis; L-valine from pyruvate: step 2/4. Functionally, involved in the biosynthesis of branched-chain amino acids (BCAA). Catalyzes an alkyl-migration followed by a ketol-acid reduction of (S)-2-acetolactate (S2AL) to yield (R)-2,3-dihydroxy-isovalerate. In the isomerase reaction, S2AL is rearranged via a Mg-dependent methyl migration to produce 3-hydroxy-3-methyl-2-ketobutyrate (HMKB). In the reductase reaction, this 2-ketoacid undergoes a metal-dependent reduction by NADPH to yield (R)-2,3-dihydroxy-isovalerate. This chain is Ketol-acid reductoisomerase (NADP(+)), found in Bacillus licheniformis (strain ATCC 14580 / DSM 13 / JCM 2505 / CCUG 7422 / NBRC 12200 / NCIMB 9375 / NCTC 10341 / NRRL NRS-1264 / Gibson 46).